A 270-amino-acid chain; its full sequence is MSMQTAPIKKITLNHLQAKKNQEKIIAITAYDALFAQIFDPLVDVILVGDSLNMSFFNQNDTLSASVKMMLYHTKAVCAGAKTPFIITDMPFGSYKDEKTALKNAIRVYKETQASAIKLEGGKEKAKLVKTLTNEGVIVVGHIGLMPQFVRLDGGYKIKGKNEEQQKKLLEDALSLEEAGAGLLVLEGITTPIAQTITQKIKIPTIGIGSGKDCDGQILVWSDMLGFFDSFKPKFVREYLKGKELVQNAIKQYADDVKKGNFPNELESYH.

Mg(2+) is bound by residues Asp50 and Asp89. 3-methyl-2-oxobutanoate is bound by residues 50 to 51 (DS), Asp89, and Lys118. Mg(2+) is bound at residue Glu120. Residue Glu187 is the Proton acceptor of the active site.

It belongs to the PanB family. In terms of assembly, homodecamer; pentamer of dimers. Mg(2+) is required as a cofactor.

It localises to the cytoplasm. It carries out the reaction 3-methyl-2-oxobutanoate + (6R)-5,10-methylene-5,6,7,8-tetrahydrofolate + H2O = 2-dehydropantoate + (6S)-5,6,7,8-tetrahydrofolate. It functions in the pathway cofactor biosynthesis; (R)-pantothenate biosynthesis; (R)-pantoate from 3-methyl-2-oxobutanoate: step 1/2. Its function is as follows. Catalyzes the reversible reaction in which hydroxymethyl group from 5,10-methylenetetrahydrofolate is transferred onto alpha-ketoisovalerate to form ketopantoate. The polypeptide is 3-methyl-2-oxobutanoate hydroxymethyltransferase (Helicobacter pylori (strain HPAG1)).